We begin with the raw amino-acid sequence, 880 residues long: DNA mismatch repair protein MutS (880 aa).

Position 605 to 612 (605 to 612 (GPNMSGKS)) interacts with ATP. The segment at 790–829 (QETAAVPSRGVEPPAPVIEPTPAKEQTPVKEQTTPLVEES) is disordered. Positions 818–829 (VKEQTTPLVEES) are enriched in polar residues.

It belongs to the DNA mismatch repair MutS family.

This protein is involved in the repair of mismatches in DNA. It is possible that it carries out the mismatch recognition step. This protein has a weak ATPase activity. The protein is DNA mismatch repair protein MutS of Limosilactobacillus fermentum (strain NBRC 3956 / LMG 18251) (Lactobacillus fermentum).